The sequence spans 317 residues: Melanocyte-stimulating hormone receptor (317 aa).

At 1–37 the chain is on the extracellular side; sequence MPMHGAQRKLLGSLNSTPTATSNLGLAANHTGAPCLE. N-linked (GlcNAc...) asparagine glycosylation occurs at asparagine 29. Residues 38 to 63 traverse the membrane as a helical segment; the sequence is VSIPDGLFLSLGLVSLVENVLVVAAI. Residues 64 to 72 are Cytoplasmic-facing; sequence AKNRNLHSS. The helical transmembrane segment at 73 to 93 threads the bilayer; that stretch reads MYCFICCLALSDLLVSGSNML. Residues 94–118 lie on the Extracellular side of the membrane; sequence ETAVILLLEAGALATRTSAMQQLHN. A helical transmembrane segment spans residues 119–140; it reads TIDVLTCSSMLCSLCFLGAIAV. At 141-163 the chain is on the cytoplasmic side; the sequence is DRYISIFYALRYHSIMTLPRAQR. A helical transmembrane segment spans residues 164–183; sequence AIAAIWVASXLSSTLFITYY. Topologically, residues 184-191 are extracellular; it reads DHAAVLLC. Residues 192 to 211 traverse the membrane as a helical segment; it reads LVVFFLAMLVLMAVLYVHML. Over 212 to 240 the chain is Cytoplasmic; sequence ARACQHAHGIIRLHKRQTPAHQGFGLRGA. Residues 241-266 traverse the membrane as a helical segment; sequence ATLTILLGIFFLCWGPFFLHLTLVVF. Residues 267 to 279 lie on the Extracellular side of the membrane; it reads CPQHLTCSCIFKN. The chain crosses the membrane as a helical span at residues 280-300; sequence FKVFLTLIICNTIIDPLIYAF. The Cytoplasmic segment spans residues 301 to 317; it reads RSQELRRTLKEVLLCSW. Cysteine 315 carries S-palmitoyl cysteine lipidation.

It belongs to the G-protein coupled receptor 1 family. In terms of assembly, interacts with MGRN1, but does not undergo MGRN1-mediated ubiquitination; this interaction competes with GNAS-binding and thus inhibits agonist-induced cAMP production. Interacts with OPN3; the interaction results in a decrease in MC1R-mediated cAMP signaling and ultimately a decrease in melanin production in melanocytes.

It localises to the cell membrane. Its function is as follows. Receptor for MSH (alpha, beta and gamma) and ACTH. The activity of this receptor is mediated by G proteins which activate adenylate cyclase. Mediates melanogenesis, the production of eumelanin (black/brown) and phaeomelanin (red/yellow), via regulation of cAMP signaling in melanocytes. This is Melanocyte-stimulating hormone receptor (MC1R) from Saguinus midas (Golden-handed tamarin).